Reading from the N-terminus, the 413-residue chain is Divalent metal cation transporter MntH (413 aa).

Residues 1 to 19 (MTDNRVENSSGRAARKLRL) lie on the Cytoplasmic side of the membrane. A helical transmembrane segment spans residues 20–39 (ALMGPAFIAAIGYIDPGNFA). Residues 40 to 51 (TNIQAGASFGYQ) are Periplasmic-facing. The helical transmembrane segment at 52-71 (LLWVVVWANLMAMLIQILSA) threads the bilayer. At 72–95 (KLGIATGKNLAEQIRDHYPRPVVW) the chain is on the cytoplasmic side. A helical membrane pass occupies residues 96–118 (FYWVQAEIIAMATDLAEFIGAAI). Residues 119 to 125 (GFKLILG) are Periplasmic-facing. The chain crosses the membrane as a helical span at residues 126–145 (VSLLQGAVLTGIATFLILML). The Cytoplasmic segment spans residues 146-155 (QRRGQKPLEK). The helical transmembrane segment at 156-175 (VIGGLLLFVAAAYIVELFFS) threads the bilayer. Residues 176-196 (QPDMAQLGKGMVIPALPNPEA) lie on the Periplasmic side of the membrane. The chain crosses the membrane as a helical span at residues 197 to 220 (VFLAAGVLGATIMPHVIYLHSSLT). Residues 221-238 (QHLHGGTRQQRYSATKWD) lie on the Cytoplasmic side of the membrane. Residues 239 to 258 (VAIAMTIAGFVNLAMMATAA) traverse the membrane as a helical segment. The Periplasmic segment spans residues 259 to 276 (AAFHFSGHTGIADLDQAY). Residues 277-297 (LTLEPLLSHAAATVFGLSLVA) traverse the membrane as a helical segment. Residues 298-327 (AGLSSTVVGTLAGQVVMQGFVRFHIPLWVR) are Cytoplasmic-facing. Residues 328-344 (RSITMLPSFIVILMGLD) traverse the membrane as a helical segment. The Periplasmic portion of the chain corresponds to 345 to 350 (PTRILV). Residues 351 to 370 (MSQVLLSFGIALALVPLLIF) form a helical membrane-spanning segment. Over 371 to 387 (TSNATLMGELVNTRRVK) the chain is Cytoplasmic. A helical membrane pass occupies residues 388–406 (QIGWIIVVLVVALNIWLLV). The Periplasmic segment spans residues 407–413 (GTVMGLS).

Belongs to the NRAMP family.

The protein resides in the cell inner membrane. Functionally, h(+)-stimulated, divalent metal cation uptake system. This chain is Divalent metal cation transporter MntH, found in Salmonella gallinarum (strain 287/91 / NCTC 13346).